A 99-amino-acid polypeptide reads, in one-letter code: Ubiquitin-related modifier 1 homolog (99 aa).

A 1-thioglycine modification is found at Gly-99. Residue Gly-99 forms a Glycyl lysine isopeptide (Gly-Lys) (interchain with K-? in acceptor proteins) linkage.

The protein belongs to the URM1 family. In terms of assembly, interacts with cer. Post-translationally, C-terminal thiocarboxylation occurs in 2 steps, it is first acyl-adenylated (-COAMP) via the hesA/moeB/thiF part of the MOCS3 homolog, then thiocarboxylated (-COSH) via the rhodanese domain of the MOCS3 homolog.

The protein resides in the cytoplasm. Its pathway is tRNA modification; 5-methoxycarbonylmethyl-2-thiouridine-tRNA biosynthesis. Its function is as follows. Acts as a sulfur carrier required for 2-thiolation of mcm(5)S(2)U at tRNA wobble positions of cytosolic tRNA(Lys), tRNA(Glu) and tRNA(Gln). Serves as sulfur donor in tRNA 2-thiolation reaction by being thiocarboxylated (-COSH) at its C-terminus by MOCS3. The sulfur is then transferred to tRNA to form 2-thiolation of mcm(5)S(2)U. Also acts as a ubiquitin-like protein (UBL) that is covalently conjugated via an isopeptide bond to lysine residues of target proteins such as Prx2/Jafrac1, Ciao1, Eip71CD and GILT1. The thiocarboxylated form serves as substrate for conjugation and oxidative stress specifically induces the formation of UBL-protein conjugates. The sequence is that of Ubiquitin-related modifier 1 homolog from Drosophila virilis (Fruit fly).